Here is a 95-residue protein sequence, read N- to C-terminus: MLFYSFFKSLVGKDVVVELKNDLSICGTLHSVDQYLNIKLTDISVTDPEKYPHMLSVKNCFIRGSVVRYVQLPADEVDTQLLQDAARKEALQQKQ.

Residues 2 to 76 (LFYSFFKSLV…VRYVQLPADE (75 aa)) enclose the Sm domain. A Phosphothreonine modification is found at T79.

This sequence belongs to the snRNP Sm proteins family. In terms of assembly, component of the precatalytic spliceosome (spliceosome B complex). Component of the U4/U6-U5 tri-snRNP complex, a building block of the precatalytic spliceosome (spliceosome B complex). The U4/U6-U5 tri-snRNP complex is composed of the U4, U6 and U5 snRNAs and at least PRPF3, PRPF4, PRPF6, PRPF8, PRPF31, SNRNP200, TXNL4A, SNRNP40, SNRPB, SNRPD1, SNRPD2, SNRPD3, SNRPE, SNRPF, SNRPG, DDX23, CD2BP2, PPIH, SNU13, EFTUD2, SART1 and USP39, plus LSM2, LSM3, LSM4, LSM5, LSM6, LSM7 and LSM8. LSM2, LSM3, LSM4, LSM5, LSM6, LSM7 and LSM8 form a heptameric, ring-shaped subcomplex (the LSM2-8 complex) that is part of the U4/U6-U5 tri-snRNP complex and the precatalytic spliceosome.

It localises to the nucleus. In terms of biological role, plays a role in pre-mRNA splicing as component of the U4/U6-U5 tri-snRNP complex that is involved in spliceosome assembly, and as component of the precatalytic spliceosome (spliceosome B complex). The heptameric LSM2-8 complex binds specifically to the 3'-terminal U-tract of U6 snRNA. The protein is U6 snRNA-associated Sm-like protein LSm2 (LSM2) of Homo sapiens (Human).